The primary structure comprises 39 residues: Mating pheromone Er-11 (39 aa).

Disulfide bonds link C3/C19, C10/C34, and C15/C26.

Homodimer.

The protein localises to the secreted. Its function is as follows. Mating ciliate pheromones (or gamones) are diffusible extracellular communication signals that distinguish different intraspecific classes of cells commonly referred to as 'mating types'. They prepare the latter for conjugation by changing their cell surface properties. The chain is Mating pheromone Er-11 (MAT11) from Euplotes raikovi.